The sequence spans 224 residues: Transcription cofactor HES-6 (224 aa).

A disordered region spans residues 1–31; it reads MAPSQAPSRDRAGQEDEDRWEARGDRKARKP. Over residues 8–25 the composition is skewed to basic and acidic residues; it reads SRDRAGQEDEDRWEARGD. The bHLH domain maps to 25–77; it reads DRKARKPLVEKKRRARINESLQELRLLLAGTEVQAKLENAEVLELTVRRVQGA. The Orange domain maps to 96–129; the sequence is FAAGYIQCMHEVHTFVSTCQAIDATVSAELLNHL. The disordered stretch occupies residues 146-209; that stretch reads GDSLAGLPGG…GPDLVSTSLG (64 aa). Over residues 158–171 the composition is skewed to low complexity; sequence RSSWPPGGSPESPL. Positions 181 to 190 are enriched in acidic residues; it reads LCSDLEEIPE. The WRPW motif motif lies at 221 to 224; sequence WRPW.

In terms of assembly, transcription repression requires formation of a complex with a corepressor protein of the Groucho/TLE family. Interacts with HES1. As to expression, expressed in both undifferentiated and differentiated cells. High levels of expression are observed in several embryonic tissues including the nervous system, muscle and thymus. In the nervous system, initially expressed in the closing neural tube, then in the spinal cord, cranial and dorsal root ganglia, and brain neuroepithelium. Also expressed in epithelial cells of the embryonic respiratory, urinary and digestive systems. In the limb buds, expressed in skeletal muscle and presumptive tendons.

The protein localises to the nucleus. Does not bind DNA itself but suppresses both HES1-mediated N box-dependent transcriptional repression and binding of HES1 to E box sequences. Also suppresses HES1-mediated inhibition of the heterodimer formed by ASCL1/MASH1 and TCF3/E47, allowing ASCL1 and TCF3 to up-regulate transcription in its presence. Promotes cell differentiation. The sequence is that of Transcription cofactor HES-6 from Mus musculus (Mouse).